Reading from the N-terminus, the 330-residue chain is Phospho-N-acetylmuramoyl-pentapeptide-transferase (330 aa).

A run of 10 helical transmembrane segments spans residues 3–23 (SVVL…SSFI), 49–69 (TPTM…AVVA), 71–91 (PNPA…VGLY), 111–131 (FLLL…YVGV), 145–165 (VLGP…FVIV), 179–199 (GLAA…AFLE), 204–224 (LAII…YNSH), 228–248 (IFMG…AAIL), 256–276 (PVIG…VVVF), and 307–327 (FWIV…FFLY).

This sequence belongs to the glycosyltransferase 4 family. MraY subfamily. It depends on Mg(2+) as a cofactor.

The protein resides in the cell membrane. It catalyses the reaction UDP-N-acetyl-alpha-D-muramoyl-L-alanyl-gamma-D-glutamyl-meso-2,6-diaminopimeloyl-D-alanyl-D-alanine + di-trans,octa-cis-undecaprenyl phosphate = di-trans,octa-cis-undecaprenyl diphospho-N-acetyl-alpha-D-muramoyl-L-alanyl-D-glutamyl-meso-2,6-diaminopimeloyl-D-alanyl-D-alanine + UMP. It functions in the pathway cell wall biogenesis; peptidoglycan biosynthesis. Functionally, catalyzes the initial step of the lipid cycle reactions in the biosynthesis of the cell wall peptidoglycan: transfers peptidoglycan precursor phospho-MurNAc-pentapeptide from UDP-MurNAc-pentapeptide onto the lipid carrier undecaprenyl phosphate, yielding undecaprenyl-pyrophosphoryl-MurNAc-pentapeptide, known as lipid I. This is Phospho-N-acetylmuramoyl-pentapeptide-transferase from Rubrobacter xylanophilus (strain DSM 9941 / JCM 11954 / NBRC 16129 / PRD-1).